The sequence spans 120 residues: MSRLTLPKNARLLKRKQFVYVQRNGRCCRADQVTLRVVPSRHSNTRKVGITVSKKFGKAHQRNRFKRIVREAFRHVRPNLPGCQVVISPRGNSQPDFLKLSEELLQRIPEALPLASSSRC.

Belongs to the RnpA family. As to quaternary structure, consists of a catalytic RNA component (M1 or rnpB) and a protein subunit.

The enzyme catalyses Endonucleolytic cleavage of RNA, removing 5'-extranucleotides from tRNA precursor.. RNaseP catalyzes the removal of the 5'-leader sequence from pre-tRNA to produce the mature 5'-terminus. It can also cleave other RNA substrates such as 4.5S RNA. The protein component plays an auxiliary but essential role in vivo by binding to the 5'-leader sequence and broadening the substrate specificity of the ribozyme. This Chlamydia trachomatis serovar D (strain ATCC VR-885 / DSM 19411 / UW-3/Cx) protein is Ribonuclease P protein component.